The following is a 621-amino-acid chain: Chaperone protein HscA homolog (621 aa).

Belongs to the heat shock protein 70 family.

Functionally, chaperone involved in the maturation of iron-sulfur cluster-containing proteins. Has a low intrinsic ATPase activity which is markedly stimulated by HscB. In Cupriavidus taiwanensis (strain DSM 17343 / BCRC 17206 / CCUG 44338 / CIP 107171 / LMG 19424 / R1) (Ralstonia taiwanensis (strain LMG 19424)), this protein is Chaperone protein HscA homolog.